A 481-amino-acid chain; its full sequence is tRNA-2-methylthio-N(6)-dimethylallyladenosine synthase (481 aa).

The 117-residue stretch at 24-140 (KKLFIESYGC…LPNLLNEVEE (117 aa)) folds into the MTTase N-terminal domain. 6 residues coordinate [4Fe-4S] cluster: Cys-33, Cys-69, Cys-103, Cys-178, Cys-182, and Cys-185. Positions 164–411 (MSNGITALVA…DLQQKHAWWR (248 aa)) constitute a Radical SAM core domain. The 64-residue stretch at 413–476 (EDFIGQTVEV…SGTLKGEAVG (64 aa)) folds into the TRAM domain.

The protein belongs to the methylthiotransferase family. MiaB subfamily. In terms of assembly, monomer. [4Fe-4S] cluster serves as cofactor.

The protein localises to the cytoplasm. It carries out the reaction N(6)-dimethylallyladenosine(37) in tRNA + (sulfur carrier)-SH + AH2 + 2 S-adenosyl-L-methionine = 2-methylsulfanyl-N(6)-dimethylallyladenosine(37) in tRNA + (sulfur carrier)-H + 5'-deoxyadenosine + L-methionine + A + S-adenosyl-L-homocysteine + 2 H(+). Catalyzes the methylthiolation of N6-(dimethylallyl)adenosine (i(6)A), leading to the formation of 2-methylthio-N6-(dimethylallyl)adenosine (ms(2)i(6)A) at position 37 in tRNAs that read codons beginning with uridine. The sequence is that of tRNA-2-methylthio-N(6)-dimethylallyladenosine synthase from Flavobacterium psychrophilum (strain ATCC 49511 / DSM 21280 / CIP 103535 / JIP02/86).